Consider the following 308-residue polypeptide: rRNA 2'-O-methyltransferase fibrillarin 1 (308 aa).

Residues 1 to 68 (MRPPVTGGRG…PRGGMKGGSK (68 aa)) are disordered. Residues 22 to 35 (GRGFGGGRSFGGGR) show a composition bias toward gly residues. A compositionally biased stretch (basic residues) spans 42-52 (SGPRGRGRGAP). Residues 53 to 65 (RGRGGPPRGGMKG) show a composition bias toward gly residues. Residues 156–157 (TT), 175–176 (EF), 200–201 (DA), and 220–223 (DVAQ) each bind S-adenosyl-L-methionine.

It belongs to the methyltransferase superfamily. Fibrillarin family. In terms of assembly, component of box C/D small nucleolar ribonucleoprotein (snoRNP) particles. Interacts with SKP1A. In terms of tissue distribution, expressed in roots, leaves and flowers. Expressed in stems.

It localises to the nucleus. Its subcellular location is the nucleolus. It catalyses the reaction a ribonucleotide in rRNA + S-adenosyl-L-methionine = a 2'-O-methylribonucleotide in rRNA + S-adenosyl-L-homocysteine + H(+). The enzyme catalyses L-glutaminyl-[histone H2A] + S-adenosyl-L-methionine = N(5)-methyl-L-glutaminyl-[histone H2A] + S-adenosyl-L-homocysteine + H(+). In terms of biological role, S-adenosyl-L-methionine-dependent methyltransferase that has the ability to methylate both RNAs and proteins. Involved in pre-rRNA processing. Utilizes the methyl donor S-adenosyl-L-methionine to catalyze the site-specific 2'-hydroxyl methylation of ribose moieties in pre-ribosomal RNA. Site specificity is provided by a guide RNA that base pairs with the substrate. Methylation occurs at a characteristic distance from the sequence involved in base pairing with the guide RNA. Also acts as a protein methyltransferase by mediating methylation of 'Gln-105' of histone H2A (H2AQ105me), a modification that impairs binding of the FACT complex and is specifically present at 35S ribosomal DNA locus. Binds monophosphate phosphoinositides in vitro. The polypeptide is rRNA 2'-O-methyltransferase fibrillarin 1 (Arabidopsis thaliana (Mouse-ear cress)).